Consider the following 128-residue polypeptide: Small ribosomal subunit protein uS8c (128 aa).

This sequence belongs to the universal ribosomal protein uS8 family. As to quaternary structure, part of the 30S ribosomal subunit.

The protein localises to the plastid. Its subcellular location is the chloroplast. Functionally, one of the primary rRNA binding proteins, it binds directly to 16S rRNA central domain where it helps coordinate assembly of the platform of the 30S subunit. This is Small ribosomal subunit protein uS8c (rps8) from Gnetum parvifolium (Small-leaved jointfir).